A 222-amino-acid polypeptide reads, in one-letter code: Chymotrypsin-1 (222 aa).

The 221-residue stretch at 1–221 folds into the Peptidase S1 domain; that stretch reads IVGGKDAPVG…FVSWINANLK (221 aa). The cysteines at positions 26 and 42 are disulfide-linked. Active-site charge relay system residues include His-41 and Asp-87. 2 disulfides stabilise this stretch: Cys-151-Cys-164 and Cys-174-Cys-198. Catalysis depends on Ser-178, which acts as the Charge relay system.

Belongs to the peptidase S1 family.

It is found in the secreted. It localises to the extracellular space. It carries out the reaction Preferential cleavage: Tyr-|-Xaa, Trp-|-Xaa, Phe-|-Xaa, Leu-|-Xaa.. This chain is Chymotrypsin-1, found in Solenopsis invicta (Red imported fire ant).